A 74-amino-acid chain; its full sequence is MDSEVQRDGRILDLIDDAWREDKLPYEDVAIPLNELPEPEQDNGGTTESVKEQEMKWTDLALQYLHENVPPIGN.

The tract at residues 33-53 is disordered; that stretch reads LNELPEPEQDNGGTTESVKEQ.

Belongs to the APC13 family. As to quaternary structure, the mammalian APC/C is composed at least of 14 distinct subunits ANAPC1, ANAPC2, CDC27/APC3, ANAPC4, ANAPC5, CDC16/APC6, ANAPC7, CDC23/APC8, ANAPC10, ANAPC11, CDC26/APC12, ANAPC13, ANAPC15 and ANAPC16 that assemble into a complex of at least 19 chains with a combined molecular mass of around 1.2 MDa; APC/C interacts with FZR1 and FBXO5.

The protein localises to the nucleus. It functions in the pathway protein modification; protein ubiquitination. Its function is as follows. Component of the anaphase promoting complex/cyclosome (APC/C), a cell cycle-regulated E3 ubiquitin ligase that controls progression through mitosis and the G1 phase of the cell cycle. The APC/C complex acts by mediating ubiquitination and subsequent degradation of target proteins: it mainly mediates the formation of 'Lys-11'-linked polyubiquitin chains and, to a lower extent, the formation of 'Lys-48'- and 'Lys-63'-linked polyubiquitin chains. The APC/C complex catalyzes assembly of branched 'Lys-11'-/'Lys-48'-linked branched ubiquitin chains on target proteins. The polypeptide is Anaphase-promoting complex subunit 13 (ANAPC13) (Bos taurus (Bovine)).